The chain runs to 260 residues: Snake venom serine protease homolog 2A (260 aa).

The first 18 residues, methionine 1–alanine 18, serve as a signal peptide directing secretion. A propeptide spanning residues glutamine 19–leucine 24 is cleaved from the precursor. Residues isoleucine 25–alanine 251 enclose the Peptidase S1 domain. 6 disulfides stabilise this stretch: cysteine 31–cysteine 165, cysteine 52–cysteine 68, cysteine 100–cysteine 258, cysteine 144–cysteine 212, cysteine 176–cysteine 191, and cysteine 202–cysteine 227. 3 N-linked (GlcNAc...) asparagine glycosylation sites follow: asparagine 83, asparagine 123, and asparagine 124.

The protein belongs to the peptidase S1 family. Snake venom subfamily. Expressed by the venom gland.

Its subcellular location is the secreted. Functionally, snake venom serine protease homolog that may act in the hemostasis system of the prey. This chain is Snake venom serine protease homolog 2A (TLG2A), found in Craspedocephalus gramineus (Bamboo pit viper).